Reading from the N-terminus, the 147-residue chain is Cytochrome c-type biogenesis protein CcmE 1 (147 aa).

The Cytoplasmic portion of the chain corresponds to 1–9 (MKSLKKQRR). The helical; Signal-anchor for type II membrane protein transmembrane segment at 10–30 (IQVIILATVALVLATGLIGYA) threads the bilayer. Topologically, residues 31-147 (MRDGINFFRA…EQGVYQAPES (117 aa)) are periplasmic. Heme is bound by residues H123 and Y127.

The protein belongs to the CcmE/CycJ family.

It is found in the cell inner membrane. Functionally, heme chaperone required for the biogenesis of c-type cytochromes. Transiently binds heme delivered by CcmC and transfers the heme to apo-cytochromes in a process facilitated by CcmF and CcmH. The chain is Cytochrome c-type biogenesis protein CcmE 1 from Ruegeria pomeroyi (strain ATCC 700808 / DSM 15171 / DSS-3) (Silicibacter pomeroyi).